The chain runs to 205 residues: MIVSLIATVLFGYLLGSVSFSYIIAKKIKKIDIRSEGSGNAGATNTLRVLGIGPAICVLLLDVAKGVAPALLAIALTNGDYPLVPALAGLAAILGHNWPIYFGFRGGKGVATSIGVVATLLFLPALCAGIVAILSIVFTKYVSLGSLLFAVLTPIAALIMLPFFHYPLEYIYLAVLLAILSLWRHRTNMGRLIAGTENKLGKKHA.

6 consecutive transmembrane segments (helical) span residues 5 to 25 (LIAT…YIIA), 56 to 76 (ICVL…AIAL), 84 to 104 (VPAL…YFGF), 114 to 134 (IGVV…VAIL), 144 to 164 (LGSL…LPFF), and 165 to 185 (HYPL…LWRH).

The protein belongs to the PlsY family. Probably interacts with PlsX.

It is found in the cell membrane. The enzyme catalyses an acyl phosphate + sn-glycerol 3-phosphate = a 1-acyl-sn-glycero-3-phosphate + phosphate. The protein operates within lipid metabolism; phospholipid metabolism. In terms of biological role, catalyzes the transfer of an acyl group from acyl-phosphate (acyl-PO(4)) to glycerol-3-phosphate (G3P) to form lysophosphatidic acid (LPA). This enzyme utilizes acyl-phosphate as fatty acyl donor, but not acyl-CoA or acyl-ACP. The protein is Glycerol-3-phosphate acyltransferase of Shouchella clausii (strain KSM-K16) (Alkalihalobacillus clausii).